The primary structure comprises 90 residues: Probable Fe(2+)-trafficking protein (90 aa).

Belongs to the Fe(2+)-trafficking protein family.

Could be a mediator in iron transactions between iron acquisition and iron-requiring processes, such as synthesis and/or repair of Fe-S clusters in biosynthetic enzymes. The sequence is that of Probable Fe(2+)-trafficking protein from Aliivibrio fischeri (strain ATCC 700601 / ES114) (Vibrio fischeri).